Reading from the N-terminus, the 386-residue chain is Acetylornithine aminotransferase (386 aa).

Residues 94–95 and F121 each bind pyridoxal 5'-phosphate; that span reads GT. R124 serves as a coordination point for N(2)-acetyl-L-ornithine. 206 to 209 provides a ligand contact to pyridoxal 5'-phosphate; it reads DEVQ. At K235 the chain carries N6-(pyridoxal phosphate)lysine. Residue S263 coordinates N(2)-acetyl-L-ornithine. Residue T264 coordinates pyridoxal 5'-phosphate.

This sequence belongs to the class-III pyridoxal-phosphate-dependent aminotransferase family. ArgD subfamily. Homodimer. It depends on pyridoxal 5'-phosphate as a cofactor.

Its subcellular location is the cytoplasm. It catalyses the reaction N(2)-acetyl-L-ornithine + 2-oxoglutarate = N-acetyl-L-glutamate 5-semialdehyde + L-glutamate. The protein operates within amino-acid biosynthesis; L-arginine biosynthesis; N(2)-acetyl-L-ornithine from L-glutamate: step 4/4. This Listeria monocytogenes serovar 1/2a (strain ATCC BAA-679 / EGD-e) protein is Acetylornithine aminotransferase.